Reading from the N-terminus, the 218-residue chain is Molybdenum cofactor guanylyltransferase (218 aa).

Residues 16-18 (LAG), K28, N56, D74, and D109 each bind GTP. D109 lines the Mg(2+) pocket.

Belongs to the MobA family. Monomer. The cofactor is Mg(2+).

Its subcellular location is the cytoplasm. The catalysed reaction is Mo-molybdopterin + GTP + H(+) = Mo-molybdopterin guanine dinucleotide + diphosphate. In terms of biological role, transfers a GMP moiety from GTP to Mo-molybdopterin (Mo-MPT) cofactor (Moco or molybdenum cofactor) to form Mo-molybdopterin guanine dinucleotide (Mo-MGD) cofactor. The protein is Molybdenum cofactor guanylyltransferase of Sinorhizobium fredii (strain NBRC 101917 / NGR234).